The primary structure comprises 351 residues: Divinyl chlorophyll a/b light-harvesting protein PcbC (351 aa).

The next 6 membrane-spanning stretches (helical) occupy residues 27-47, 81-101, 140-160, 202-222, 242-262, and 309-329; these read FIGS…GSTL, GVWT…FSAV, FILG…VEWA, VMSG…WHIA, AVLS…AFWC, and LSNV…WHAL.

It belongs to the PsbB/PsbC family. IsiA/Pcb subfamily. The antenna complex consists of divinyl chlorophylls (a and b) and divinyl chlorophyll a/b binding proteins and binds more divinyl chlorophyll b than does the antenna complex from high-light-adapted Prochlorococcus. Requires divinyl chlorophyll a as cofactor. Divinyl chlorophyll b serves as cofactor.

Its subcellular location is the cellular thylakoid membrane. Functionally, the antenna complex functions as a light receptor, it captures and delivers excitation energy to photosystems II and I. The Prochlorales pcb genes are not related to higher plant LHCs. In Prochlorococcus marinus (strain NATL2A), this protein is Divinyl chlorophyll a/b light-harvesting protein PcbC (pcbC).